A 242-amino-acid polypeptide reads, in one-letter code: Caffeoyl-CoA O-methyltransferase 4 (242 aa).

K16 serves as a coordination point for substrate. S-adenosyl-L-methionine-binding positions include T58, E80, 82–83 (GV), S88, D106, and A135. D158 lines the substrate pocket. D158 is an a divalent metal cation binding site. Position 160 (D160) interacts with S-adenosyl-L-methionine. A divalent metal cation is bound by residues D184 and N185. N189 is a substrate binding site.

The protein belongs to the class I-like SAM-binding methyltransferase superfamily. Cation-dependent O-methyltransferase family. CCoAMT subfamily. Requires Mg(2+) as cofactor. Mostly expressed in the bottom and middle parts of the stems.

It carries out the reaction (E)-caffeoyl-CoA + S-adenosyl-L-methionine = (E)-feruloyl-CoA + S-adenosyl-L-homocysteine + H(+). It participates in aromatic compound metabolism; phenylpropanoid biosynthesis. Methylates caffeoyl-CoA to feruloyl-CoA and 5-hydroxyferuloyl-CoA to sinapoyl-CoA. Plays a role in the synthesis of feruloylated polysaccharides. Involved in the reinforcement of the plant cell wall. Also involved in the responding to wounding or pathogen challenge by the increased formation of cell wall-bound ferulic acid polymers. The protein is Caffeoyl-CoA O-methyltransferase 4 (CCOAOMT4) of Nicotiana tabacum (Common tobacco).